Here is a 484-residue protein sequence, read N- to C-terminus: 6-phosphogluconate dehydrogenase, decarboxylating (484 aa).

NADP(+)-binding positions include 10 to 15 (GLAVMG), 33 to 35 (NRT), 75 to 77 (IKA), and asparagine 103. Substrate is bound by residues asparagine 103 and 129 to 131 (SGG). Lysine 183 serves as the catalytic Proton acceptor. Residue 186-187 (HN) coordinates substrate. Catalysis depends on glutamate 190, which acts as the Proton donor. Substrate is bound by residues tyrosine 191, lysine 260, arginine 287, arginine 448, and histidine 454.

This sequence belongs to the 6-phosphogluconate dehydrogenase family. In terms of assembly, homodimer.

The catalysed reaction is 6-phospho-D-gluconate + NADP(+) = D-ribulose 5-phosphate + CO2 + NADPH. It participates in carbohydrate degradation; pentose phosphate pathway; D-ribulose 5-phosphate from D-glucose 6-phosphate (oxidative stage): step 3/3. In terms of biological role, catalyzes the oxidative decarboxylation of 6-phosphogluconate to ribulose 5-phosphate and CO(2), with concomitant reduction of NADP to NADPH. This chain is 6-phosphogluconate dehydrogenase, decarboxylating, found in Caenorhabditis elegans.